A 99-amino-acid chain; its full sequence is MIPKGTVKRIMKDNTEMYVSTESVVALVDILQEMIVTTTKIAEENAAKDKRKTIKARDIEECDAERLKEKILQVSERTEKVNMLANEILHVIASELERY.

Residues 52 to 55 (KTIK) form an interaction with DNA region.

This sequence belongs to the archaeal histone HMF family. Homodimer or heterodimer with another histone. Dimers then assemble into higher oligomers, with the DNA wrapped around the protein core.

It is found in the cytoplasm. The protein localises to the chromosome. Functionally, binds and compact DNA (95 to 150 base pairs) to form nucleosome-like structures that contain positive DNA supercoils. Increases the resistance of DNA to thermal denaturation (in vitro). In Methanococcus voltae, this protein is DNA-binding protein HmvA (hmvA).